A 245-amino-acid chain; its full sequence is MNRYRLTVEFDGRNFMGWQRQKHGATIQGSIEEAGASIAGQPTPVQAAGRTDAGVHGLAMTAHIDVARDFTPFRLMEALNARLKPRPIAILSCEQVDPEWHARFSCIGRRYLYRIINRRPPLTLEAGRAWHVIKPLDAETMDIAAKRLIGLHDFTTFRSVHCQSKSPVKTLDHLDVRRIGDQIEITAAARSFLHHQVRSMVGCLVLVGQGQWTADDMTTALEARNRAALGFNAPPDGLYFTQAIY.

Catalysis depends on aspartate 52, which acts as the Nucleophile. Residue tyrosine 111 coordinates substrate.

Belongs to the tRNA pseudouridine synthase TruA family. As to quaternary structure, homodimer.

It catalyses the reaction uridine(38/39/40) in tRNA = pseudouridine(38/39/40) in tRNA. Its function is as follows. Formation of pseudouridine at positions 38, 39 and 40 in the anticodon stem and loop of transfer RNAs. The protein is tRNA pseudouridine synthase A of Zymomonas mobilis subsp. mobilis (strain ATCC 31821 / ZM4 / CP4).